The chain runs to 257 residues: Imidazole glycerol phosphate synthase subunit HisF (257 aa).

Residues Asp12 and Asp131 contribute to the active site.

It belongs to the HisA/HisF family. As to quaternary structure, heterodimer of HisH and HisF.

The protein resides in the cytoplasm. The catalysed reaction is 5-[(5-phospho-1-deoxy-D-ribulos-1-ylimino)methylamino]-1-(5-phospho-beta-D-ribosyl)imidazole-4-carboxamide + L-glutamine = D-erythro-1-(imidazol-4-yl)glycerol 3-phosphate + 5-amino-1-(5-phospho-beta-D-ribosyl)imidazole-4-carboxamide + L-glutamate + H(+). The protein operates within amino-acid biosynthesis; L-histidine biosynthesis; L-histidine from 5-phospho-alpha-D-ribose 1-diphosphate: step 5/9. In terms of biological role, IGPS catalyzes the conversion of PRFAR and glutamine to IGP, AICAR and glutamate. The HisF subunit catalyzes the cyclization activity that produces IGP and AICAR from PRFAR using the ammonia provided by the HisH subunit. The protein is Imidazole glycerol phosphate synthase subunit HisF of Cellvibrio japonicus (strain Ueda107) (Pseudomonas fluorescens subsp. cellulosa).